The following is a 351-amino-acid chain: Transmembrane protein 184 homolog DDB_G0279555 (351 aa).

The chain crosses the membrane as a helical span at residues 1 to 21 (MWIVAGVCSGVAILLSFYLIY). Residue Asn26 is glycosylated (N-linked (GlcNAc...) asparagine). The next 5 helical transmembrane spans lie at 39–59 (ILIM…FVEL), 73–93 (YVLY…FDLV), 127–147 (FVLQ…VLET), 162–182 (YVWL…FLVL), and 206–226 (ILFF…FGVI). A glycan (N-linked (GlcNAc...) asparagine) is linked at Asn236. A helical membrane pass occupies residues 241–261 (LQDFITCVEMVILAICHHFFF). N-linked (GlcNAc...) asparagine glycans are attached at residues Asn301 and Asn304. The disordered stretch occupies residues 327 to 351 (HNHPTTKKKDEESNLLEPEDKDIII). Residues 339-351 (SNLLEPEDKDIII) are compositionally biased toward acidic residues.

It belongs to the TMEM184 family.

The protein localises to the cell membrane. Its function is as follows. Probable transporter. In Dictyostelium discoideum (Social amoeba), this protein is Transmembrane protein 184 homolog DDB_G0279555 (tmem184C).